Here is a 1368-residue protein sequence, read N- to C-terminus: DNA-directed RNA polymerase subunit beta (1368 aa).

The protein belongs to the RNA polymerase beta chain family. The RNAP catalytic core consists of 2 alpha, 1 beta, 1 beta' and 1 omega subunit. When a sigma factor is associated with the core the holoenzyme is formed, which can initiate transcription.

It catalyses the reaction RNA(n) + a ribonucleoside 5'-triphosphate = RNA(n+1) + diphosphate. In terms of biological role, DNA-dependent RNA polymerase catalyzes the transcription of DNA into RNA using the four ribonucleoside triphosphates as substrates. The sequence is that of DNA-directed RNA polymerase subunit beta from Cupriavidus pinatubonensis (strain JMP 134 / LMG 1197) (Cupriavidus necator (strain JMP 134)).